A 482-amino-acid chain; its full sequence is GTPase Der (482 aa).

EngA-type G domains follow at residues 3-166 (PVVA…SEQF) and 195-368 (IKLA…NSAT). GTP is bound by residues 9-16 (GRPNVGKS), 56-60 (DTGGI), 118-121 (NKVD), 201-208 (GKPNVGKS), 248-252 (DTAGV), and 313-316 (NKWD). The region spanning 369–453 (KRINTSMLTR…PIKVEFREGA (85 aa)) is the KH-like domain.

The protein belongs to the TRAFAC class TrmE-Era-EngA-EngB-Septin-like GTPase superfamily. EngA (Der) GTPase family. As to quaternary structure, associates with the 50S ribosomal subunit.

Its function is as follows. GTPase that plays an essential role in the late steps of ribosome biogenesis. This Pseudoalteromonas atlantica (strain T6c / ATCC BAA-1087) protein is GTPase Der.